We begin with the raw amino-acid sequence, 262 residues long: Tryptophan synthase alpha chain (262 aa).

Catalysis depends on proton acceptor residues E48 and D59.

This sequence belongs to the TrpA family. In terms of assembly, tetramer of two alpha and two beta chains.

The enzyme catalyses (1S,2R)-1-C-(indol-3-yl)glycerol 3-phosphate + L-serine = D-glyceraldehyde 3-phosphate + L-tryptophan + H2O. Its pathway is amino-acid biosynthesis; L-tryptophan biosynthesis; L-tryptophan from chorismate: step 5/5. Functionally, the alpha subunit is responsible for the aldol cleavage of indoleglycerol phosphate to indole and glyceraldehyde 3-phosphate. In Helicobacter pylori (strain G27), this protein is Tryptophan synthase alpha chain.